The sequence spans 142 residues: MFQGASSLSLDAKGRLSVPTRHRDVLSATAGGQLTITKHPHGCLMVFPRPEWEKFRERIAALPMSAQWWKRVFLGNAMDVEMDGTGRILVSPELRAATGIVRDTLLLGMGNHFELWDKATYEAKEAEATQGEMPDVFQDFAF.

SpoVT-AbrB domains are found at residues 5–51 (ASSL…PRPE) and 77–120 (AMDV…DKAT).

It belongs to the MraZ family. As to quaternary structure, forms oligomers.

It localises to the cytoplasm. The protein localises to the nucleoid. This chain is Transcriptional regulator MraZ, found in Variovorax paradoxus (strain S110).